A 138-amino-acid chain; its full sequence is Homeobox protein HD-11 (138 aa).

A DNA-binding region (homeobox) is located at residues 30-89 (CTGKQMRKTRLQTCVLNRIFEISRFPSSKTIVDLALLINVHPKSIQKWFQNTRQAIRKKG).

Its subcellular location is the nucleus. The protein is Homeobox protein HD-11 (HD-11) of Encephalitozoon cuniculi (strain GB-M1) (Microsporidian parasite).